The chain runs to 491 residues: Cytochrome P450 2F3 (491 aa).

Heme is bound at residue C436.

It belongs to the cytochrome P450 family. Requires heme as cofactor. Lung specific.

The protein resides in the endoplasmic reticulum membrane. It localises to the microsome membrane. It carries out the reaction an organic molecule + reduced [NADPH--hemoprotein reductase] + O2 = an alcohol + oxidized [NADPH--hemoprotein reductase] + H2O + H(+). Its function is as follows. Bioactivates 3-methylindole (3MI) by dehydrogenation to the putative electrophile 3-methylene-indolenine. Stereoselectively catalyzes the formation of the 1R,2S-oxide from naphthalene. Lack activity with other common P450 substrates including 7-ethoxycoumarin. This Capra hircus (Goat) protein is Cytochrome P450 2F3 (CYP2F3).